The primary structure comprises 717 residues: MTNSAMALPPTRINRRRSTKALHDFFSRPFTQRRSQSIAGVRVSPRISVTPSCTSSKHAMSNTIEISITIHDFATTETATQITCELYDNETECEDKWSKVGTSSPHRFSRNIVFTDKFSYQYVFEKTQLIKAVFSRCHDRDKPSSSSRDILATSIFKVDELIGSFGLQLRRQLEKNGNIASALSGTQRVTDEYLGGIIVSAEMPEKEQPIVVQFHGKSLDRKDFLWDETAVFFRVFRLEEGKDDDSLVFLYESEALKNHSHPQWAEFRLDTQDAADNRNRLLEIWVMYKDVDGKEGYIGKFLTTYAKMKYGPGSDNVYSVINDVKKAQKKSYENSGKMELVKFTDVSFYSFLDYIVSGTQLHFEIGVDFSSPEPVHELDQRRFDGELHMAIRAIGSIIRDYTPNRLFAAFGIGAKIPPTFHESNEFFLNFSMDPICRGLDGVMEAYRKTQTMVTPLKESKLSPVINYVTRMSHRSGFRGLHYHVLALFTRGEVTDLKEIQQALNSASDAPLSILIIGMGDFDFSSLQKLCSKRKDGRRDVVQFIHLKSLLNGAEAPWLNKSRIAETALRHVPQHMVQYMHNANIAAKPPIQVCRSPLFHSSSLIPDKPTEFDFDLANKRPSVGIEIPSLMPNLILPPDLSPRPRQDRRGSDTQYLDVEIMRGSLTVRVPERCHSVLQTSREQYQRRLKERGLARMKFPRVELSTLESSGGSTQDSSL.

The 126-residue stretch at Tyr-193 to Tyr-318 folds into the C2 domain. The VWFA domain occupies Glu-377 to Ala-567.

It belongs to the copine family.

The chain is Copine family protein 5 (cpna-5) from Caenorhabditis elegans.